The sequence spans 469 residues: Interstitial collagenase (469 aa).

Positions 1-19 (MFSLLLLLLLLCNTGSHGF) are cleaved as a signal peptide. Positions 20-99 (PAATSETQEQ…PRCGVPDVAE (80 aa)) are cleaved as a propeptide — activation peptide. Ser-57 is modified (phosphoserine). The Cysteine switch signature appears at 90–97 (PRCGVPDV). Residue Cys-92 coordinates Zn(2+). Asn-120 carries N-linked (GlcNAc...) asparagine glycosylation. Positions 124 and 158 each coordinate Ca(2+). The Zn(2+) site is built by His-168 and Asp-170. Residues Asp-175, Gly-176, Gly-178, and Asn-180 each contribute to the Ca(2+) site. His-183 is a Zn(2+) binding site. Ca(2+)-binding residues include Gly-190, Gly-192, and Asp-194. His-196 provides a ligand contact to Zn(2+). Asp-198, Glu-199, and Glu-201 together coordinate Ca(2+). A Zn(2+)-binding site is contributed by His-218. Residue Glu-219 is part of the active site. Zn(2+) contacts are provided by His-222 and His-228. Residue Thr-274 is modified to Phosphothreonine. 4 Hemopexin repeats span residues 275–324 (PQVC…WPQV), 325–371 (PNGL…FGFP), 374–422 (VKNI…FPGI), and 423–466 (GNKV…WFNC). Cys-278 and Cys-466 are joined by a disulfide. The Ca(2+) site is built by Asp-285 and Gln-329. The residue at position 360 (Tyr-360) is a Phosphotyrosine; by PKDCC. Asp-378 and Asp-427 together coordinate Ca(2+).

The protein belongs to the peptidase M10A family. Requires Ca(2+) as cofactor. The cofactor is Zn(2+). Undergoes autolytic cleavage to produce a N-terminal fragment having reduced collagenolytic activity. Post-translationally, tyrosine phosphorylated in platelets by PKDCC/VLK.

The protein localises to the secreted. Its subcellular location is the extracellular space. It localises to the extracellular matrix. It carries out the reaction Cleavage of the triple helix of collagen at about three-quarters of the length of the molecule from the N-terminus, at 775-Gly-|-Ile-776 in the alpha1(I) chain. Cleaves synthetic substrates and alpha-macroglobulins at bonds where P1' is a hydrophobic residue.. With respect to regulation, can be activated without removal of the activation peptide. Cleaves collagens of types I, II, and III at one site in the helical domain. Also cleaves collagens of types VII and X. This is Interstitial collagenase (MMP1) from Sus scrofa (Pig).